Here is a 156-residue protein sequence, read N- to C-terminus: Beta-defensin 125 (156 aa).

An N-terminal signal peptide occupies residues 1 to 20 (MNILMLTFIICGLLTRVTKG). 3 cysteine pairs are disulfide-bonded: C27–C55, C35–C49, and C39–C56. The propeptide occupies 68 to 156 (PAFPVIHLED…PPSQTALTHN (89 aa)). The tract at residues 108–156 (GETMTPETNTPETTMPPSEATTPETTMPPSETATSETMPPPSQTALTHN) is disordered. Positions 109 to 144 (ETMTPETNTPETTMPPSEATTPETTMPPSETATSET) are enriched in low complexity.

It belongs to the beta-defensin family.

The protein resides in the secreted. Has antibacterial activity. This chain is Beta-defensin 125 (DEFB125), found in Homo sapiens (Human).